The following is a 662-amino-acid chain: MAVLTHGSPTPSGAHFDGKGINFTLFSAHAEQVTLCLFDEQGQERQIAMPARTGDIWHGYLPGGKPGQRYGYRVSGPFEPSRGHRFNPHKLLIDPRTRALEGKVGDDPRFTGGVSQPDVRDSAAALPKCLVIHEEYDWQGDKPPAIPWGNTVIYEAHVRGLTQLHPDIPPELRGTYAALAHPALIEHLKTLGITTLELLPVQFHIDEPRLQKMGLSNYWGYNVLAPFAVDPDYASGREGISPLRELRDAVKALHNAGIEVILDVVFNHSAELDVFGPTLCQRGIDNASYYWLTPDGEYDNITGCGNALRLSHPYVTQWVIDCLNYWRDSCHVDGFRFDLGTVLGRTPAFDQHAPLFAALAADERLSACKLIAEPWDIGLGGYQLGNFPTGFSEWNDQYRDAMRGFWLRGEVPRGTFAQHFAASSRLFEQRGRLPSASINQITAHDGFTLLDLLCFNQKHNQMNGEENRDGSDNNHSNNFGCEGLVADAAIWQRRKACQRALLTTLLLSQGTPMLLAGDEQGHSQQGNNNAYCQNNILTWLDWGSADRALMTFTADLIRLRQQIPALTQDQWWQSGDSNVQWLDSQGQALSDAAWEQGCQQQLQILLSQRWLVLINATDHECEMHLPEGEWEGIPPFGVSDHAERLTTWRGSAHTICVLIKRD.

The Nucleophile role is filled by Asp338. The Proton donor role is filled by Glu373.

Belongs to the glycosyl hydrolase 13 family.

The enzyme catalyses Hydrolysis of (1-&gt;6)-alpha-D-glucosidic linkages to branches with degrees of polymerization of three or four glucose residues in limit dextrin.. It functions in the pathway glycan degradation; glycogen degradation. Removes maltotriose and maltotetraose chains that are attached by 1,6-alpha-linkage to the limit dextrin main chain, generating a debranched limit dextrin. This is Glycogen debranching enzyme from Yersinia pestis.